The chain runs to 242 residues: Uroporphyrinogen-III C-methyltransferase (242 aa).

Residues Pro-12, 88–90 (GGD), 118–119 (TS), and Met-170 each bind S-adenosyl-L-homocysteine.

The protein belongs to the precorrin methyltransferase family. As to quaternary structure, homodimer.

The enzyme catalyses uroporphyrinogen III + 2 S-adenosyl-L-methionine = precorrin-2 + 2 S-adenosyl-L-homocysteine + H(+). It functions in the pathway cofactor biosynthesis; adenosylcobalamin biosynthesis; precorrin-2 from uroporphyrinogen III: step 1/1. Functionally, catalyzes the two successive C-2 and C-7 methylation reactions involved in the conversion of uroporphyrinogen III to precorrin-2 via the intermediate formation of precorrin-1. It is a step in the biosynthesis of both cobalamin (vitamin B12) and coenzyme F430. This Methanocaldococcus jannaschii (strain ATCC 43067 / DSM 2661 / JAL-1 / JCM 10045 / NBRC 100440) (Methanococcus jannaschii) protein is Uroporphyrinogen-III C-methyltransferase (cobA).